A 158-amino-acid polypeptide reads, in one-letter code: Putative pre-16S rRNA nuclease (158 aa).

This sequence belongs to the YqgF nuclease family.

Its subcellular location is the cytoplasm. Its function is as follows. Could be a nuclease involved in processing of the 5'-end of pre-16S rRNA. The chain is Putative pre-16S rRNA nuclease from Acidiphilium cryptum (strain JF-5).